The sequence spans 592 residues: Arginine--tRNA ligase (592 aa).

Residues 134 to 144 (ANPTGPLHVGH) carry the 'HIGH' region motif.

Belongs to the class-I aminoacyl-tRNA synthetase family. Monomer.

The protein resides in the cytoplasm. The enzyme catalyses tRNA(Arg) + L-arginine + ATP = L-arginyl-tRNA(Arg) + AMP + diphosphate. In Coxiella burnetii (strain CbuG_Q212) (Coxiella burnetii (strain Q212)), this protein is Arginine--tRNA ligase.